Reading from the N-terminus, the 153-residue chain is ORM1-like protein 1 (153 aa).

Topologically, residues 1-26 are cytoplasmic; that stretch reads MNVGVAHSEVNPNTRVMNSRGMWLTY. 2 consecutive transmembrane segments (helical) span residues 27–46 and 47–64; these read ALGV…FSVP and VAWT…YVFL. The Cytoplasmic segment spans residues 65-100; the sequence is HAVKGTPFETPDQGKARLLTHWEQLDYGVQFTSSRK. A helical transmembrane segment spans residues 101–121; sequence FFTISPIILYFLASFYTKYDP. Residues 122–123 are Extracellular-facing; sequence TH. The chain crosses the membrane as a helical span at residues 124-140; the sequence is FILNTASLLSVLIPKMP. Topologically, residues 141 to 153 are cytoplasmic; that stretch reads QLHGVRIFGINKY.

The protein belongs to the ORM family. Ceramide-sensitive subunit of the serine palmitoyltransferase (SPT) complex, which is also composed of SPTLC1, SPTLC2/3 and SPTSSA/B. Widely expressed. Expressed in adult and fetal heart, brain, lung, liver, skeletal muscle and kidney. Expressed in adult pancreas and placenta and in fetal spleen abd thymus. Expressed at intermediate level in pancreas, placenta and brain but low in skeletal muscle and lung.

Its subcellular location is the endoplasmic reticulum membrane. Functionally, plays an essential role in the homeostatic regulation of sphingolipid de novo biosynthesis by modulating the activity of the serine palmitoyltransferase (SPT) in response to ceramide levels. When complexed to SPT, the binding of ceramides to its N-terminus stabilizes a conformation that block SPT substrate entry, hence preventing SPT catalytic activity. Through this mechanism, maintains ceramide levels at sufficient concentrations for the production of complex sphingolipids, but which prevents the accumulation of ceramides to levels that trigger apoptosis. This Homo sapiens (Human) protein is ORM1-like protein 1 (ORMDL1).